A 548-amino-acid chain; its full sequence is Organic cation transporter protein (548 aa).

The Cytoplasmic segment spans residues 1–22 (MGYDDVITHLGEFGPYQKRIYY). Residues 23-43 (LLCLPAIVCAFHKLAGVFLLA) traverse the membrane as a helical segment. Topologically, residues 44–127 (KPDFRCALPY…TEWNLVCSRS (84 aa)) are extracellular. N-linked (GlcNAc...) asparagine glycans are attached at residues Asn-55, Asn-67, Asn-89, and Asn-97. A helical membrane pass occupies residues 128–148 (LLSATSDSLFMLGVLLGSLIF). Topologically, residues 149 to 158 (GQMSDKLGRK) are cytoplasmic. The chain crosses the membrane as a helical span at residues 159–179 (PTFFASLVLQLIFGVLAAVAP). Over 180–189 (EYFSYTISRM) the chain is Extracellular. The helical transmembrane segment at 190 to 210 (IVGATTSGVFLVAYVIALEMV) threads the bilayer. Over 211–219 (GSSYRLFAG) the chain is Cytoplasmic. Residues 220–240 (VAMQMFFSVGFMLTAGFAYFI) traverse the membrane as a helical segment. At 241–244 (HDWR) the chain is on the extracellular side. The chain crosses the membrane as a helical span at residues 245-265 (WLQIAITLPGLLFLCYYWIIP). At 266-337 (ESARWLLMKG…LLRYPNLRRK (72 aa)) the chain is on the cytoplasmic side. Residues 338-358 (TLLIFFDWFVNSGVYYGLSWN) traverse the membrane as a helical segment. Over 359–366 (TNNLGGNQ) the chain is Extracellular. A helical transmembrane segment spans residues 367–387 (LVNFMISGAVEIPGYTLLLFT). Topologically, residues 388-395 (LNRWGRRS) are cytoplasmic. A helical transmembrane segment spans residues 396 to 416 (ILCGTMMVAGISLLATIFVPS). The Extracellular portion of the chain corresponds to 417 to 419 (DMN). A helical transmembrane segment spans residues 420-440 (WLIVACAMIGKLAITSSYGTI). At 441 to 453 (YIFSAEQFPTVVR) the chain is on the cytoplasmic side. Residues 454-474 (NVGLGASSMVARVGGILAPYL) traverse the membrane as a helical segment. Over 475–482 (KLLGEIWR) the chain is Extracellular. Residues 483 to 503 (PLPLIICGALSLTAGLLSLLL) form a helical membrane-spanning segment. Over 504–548 (PETLNKPMPETIEDGENFGKKPAPQETAEEGGTQELSGMLNGKSG) the chain is Cytoplasmic. Positions 512-548 (PETIEDGENFGKKPAPQETAEEGGTQELSGMLNGKSG) are disordered.

Belongs to the major facilitator (TC 2.A.1) superfamily. Organic cation transporter (TC 2.A.1.19) family. Expressed in embryos and adults at low level. Expressed at higher level in third instar larvae.

The protein resides in the membrane. Probably transports organic cations. This Drosophila melanogaster (Fruit fly) protein is Organic cation transporter protein (Orct).